A 100-amino-acid polypeptide reads, in one-letter code: Small ribosomal subunit protein uS14 (100 aa).

The protein belongs to the universal ribosomal protein uS14 family. Part of the 30S ribosomal subunit. Contacts proteins S3 and S10.

Its function is as follows. Binds 16S rRNA, required for the assembly of 30S particles and may also be responsible for determining the conformation of the 16S rRNA at the A site. This is Small ribosomal subunit protein uS14 from Synechococcus sp. (strain RCC307).